The sequence spans 520 residues: MSRAAARFKIPMPETKADFAFPSLRAFSIVVALDMQHGIGDGESIPWRVPEDMTFFKNQTTLLRNKKPPTEKKRNAVVMGRKTWESVPVKFRPLKGRLNIVLSSKATVEELLAPLPEGQRAAAAQDVVVVNGGLAEALRLLARPLYCSSIETAYCVGGAQVYADAMLSPCIEKLQEVYLTRIYATAPACTRFFPFPPENAATAWDLASSQGRRKSEAEGLEFEICKYVPRNHEERQYLELIDRIMKTGIVKEDRTGVGTISLFGAQMRFSLRDNRLPLLTTKRVFWRGVCEELLWFLRGETSAQLLADKDIHIWDGNGSREFLDSRGLTENKEMDLGPVYGFQWRHFGADYKGFEANYDGEGVDQIKLIVETIKTNPNDRRLLVTAWNPCALQKMALPPCHLLAQFYVNTDTSELSCMLYQRSCDMGLGVPFNIASYALLTILIAKATGLRPGELVHTLGDAHVYRNHVDALKAQLERVPHAFPTLIFKEERQYLEDYELTDMEVIDYVPHPAIKMEMAV.

One can recognise a DHFR domain in the interval 26–229 (AFSIVVALDM…LEFEICKYVP (204 aa)). Valine 30 contributes to the substrate binding site. Residues alanine 32 and 38–44 (GIGDGES) contribute to the NADP(+) site. A substrate-binding site is contributed by aspartate 52. Residues 81-83 (RKT), 102-105 (LSSK), and 157-164 (GGAQVYAD) each bind NADP(+). Substrate is bound by residues tyrosine 162 and threonine 180. The interval 234-520 (ERQYLELIDR…HPAIKMEMAV (287 aa)) is thymidylate synthase. Arginine 254 contributes to the dUMP binding site. Residue cysteine 400 is part of the active site. DUMP-binding positions include histidine 401, 421 to 425 (QRSCD), asparagine 433, and 463 to 465 (HVY).

This sequence in the N-terminal section; belongs to the dihydrofolate reductase family. It in the C-terminal section; belongs to the thymidylate synthase family.

It catalyses the reaction (6S)-5,6,7,8-tetrahydrofolate + NADP(+) = 7,8-dihydrofolate + NADPH + H(+). The enzyme catalyses dUMP + (6R)-5,10-methylene-5,6,7,8-tetrahydrofolate = 7,8-dihydrofolate + dTMP. It functions in the pathway cofactor biosynthesis; tetrahydrofolate biosynthesis; 5,6,7,8-tetrahydrofolate from 7,8-dihydrofolate: step 1/1. Functionally, bifunctional enzyme. Involved in de novo dTMP biosynthesis. Key enzyme in folate metabolism. Catalyzes an essential reaction for de novo glycine and purine synthesis, DNA precursor synthesis, and for the conversion of dUMP to dTMP. This chain is Bifunctional dihydrofolate reductase-thymidylate synthase, found in Leishmania major.